The primary structure comprises 157 residues: Large ribosomal subunit protein eL24 (157 aa).

Positions 94–157 (RNQKPEVRKA…ISAPRVGGKR (64 aa)) are disordered. A compositionally biased stretch (basic and acidic residues) spans 96-117 (QKPEVRKAQREQAIRAAKESKK). The span at 123-140 (KKPAAASAKTSAKTAQKP) shows a compositional bias: low complexity.

The protein belongs to the eukaryotic ribosomal protein eL24 family. In terms of assembly, component of the large ribosomal subunit.

The protein localises to the cytoplasm. In terms of biological role, component of the large ribosomal subunit. The ribosome is a large ribonucleoprotein complex responsible for the synthesis of proteins in the cell. This is Large ribosomal subunit protein eL24 (rpl24) from Gillichthys mirabilis (Long-jawed mudsucker).